Reading from the N-terminus, the 243-residue chain is tRNA (guanine-N(1)-)-methyltransferase (243 aa).

Residues G108 and 127 to 132 (LGDFVL) each bind S-adenosyl-L-methionine.

The protein belongs to the RNA methyltransferase TrmD family. Homodimer.

The protein localises to the cytoplasm. It carries out the reaction guanosine(37) in tRNA + S-adenosyl-L-methionine = N(1)-methylguanosine(37) in tRNA + S-adenosyl-L-homocysteine + H(+). Specifically methylates guanosine-37 in various tRNAs. The chain is tRNA (guanine-N(1)-)-methyltransferase from Streptococcus equi subsp. zooepidemicus (strain H70).